We begin with the raw amino-acid sequence, 405 residues long: Acetylornithine/succinyldiaminopimelate aminotransferase (405 aa).

Residues Gly108–Thr109 and Phe141 contribute to the pyridoxal 5'-phosphate site. Position 144 (Arg144) interacts with N(2)-acetyl-L-ornithine. Residue Asp226–Gln229 participates in pyridoxal 5'-phosphate binding. At Lys255 the chain carries N6-(pyridoxal phosphate)lysine. Residue Ser283 participates in N(2)-acetyl-L-ornithine binding. Thr284 lines the pyridoxal 5'-phosphate pocket.

The protein belongs to the class-III pyridoxal-phosphate-dependent aminotransferase family. ArgD subfamily. In terms of assembly, homodimer. It depends on pyridoxal 5'-phosphate as a cofactor.

The protein resides in the cytoplasm. It carries out the reaction N(2)-acetyl-L-ornithine + 2-oxoglutarate = N-acetyl-L-glutamate 5-semialdehyde + L-glutamate. It catalyses the reaction N-succinyl-(2S,6S)-2,6-diaminopimelate + 2-oxoglutarate = (S)-2-succinylamino-6-oxoheptanedioate + L-glutamate. It functions in the pathway amino-acid biosynthesis; L-arginine biosynthesis; N(2)-acetyl-L-ornithine from L-glutamate: step 4/4. Its pathway is amino-acid biosynthesis; L-lysine biosynthesis via DAP pathway; LL-2,6-diaminopimelate from (S)-tetrahydrodipicolinate (succinylase route): step 2/3. Its activity is regulated as follows. Inhibited by gabaculine (Gcn). Involved in both the arginine and lysine biosynthetic pathways. This is Acetylornithine/succinyldiaminopimelate aminotransferase from Salmonella typhimurium (strain LT2 / SGSC1412 / ATCC 700720).